Here is a 400-residue protein sequence, read N- to C-terminus: Subtilisin-like protease 7 (400 aa).

The signal sequence occupies residues 1–20 (MGFITKAIPLALAAASVING). Positions 21-119 (AEILETRAGV…IERDARVQIN (99 aa)) are excised as a propeptide. One can recognise an Inhibitor I9 domain in the interval 36–118 (KYIVVMNDGM…YIERDARVQI (83 aa)). The 272-residue stretch at 129-400 (SWGLARVGSK…GKLINNGSGK (272 aa)) folds into the Peptidase S8 domain. Catalysis depends on charge relay system residues Asp161 and His192. A glycan (N-linked (GlcNAc...) asparagine) is linked at Asn252. Catalysis depends on Ser346, which acts as the Charge relay system. Asn396 carries N-linked (GlcNAc...) asparagine glycosylation.

This sequence belongs to the peptidase S8 family.

Its subcellular location is the secreted. Functionally, secreted subtilisin-like serine protease with keratinolytic activity that contributes to pathogenicity. The chain is Subtilisin-like protease 7 (SUB7) from Arthroderma gypseum (strain ATCC MYA-4604 / CBS 118893) (Microsporum gypseum).